We begin with the raw amino-acid sequence, 382 residues long: Chaperone protein DnaJ (382 aa).

The region spanning 5–70 is the J domain; sequence DYYETLGVSR…NKRAAYDRYG (66 aa). Residues 140–218 form a CR-type zinc finger; that stretch reads GKTAQIRVPT…CHGQGRITEE (79 aa). The Zn(2+) site is built by Cys153, Cys156, Cys170, Cys173, Cys192, Cys195, Cys206, and Cys209. CXXCXGXG motif repeat units lie at residues 153–160, 170–177, 192–199, and 206–213; these read CDVCSGSG, CGTCQGSG, CPTCHGRG, and CGKCHGQG.

It belongs to the DnaJ family. As to quaternary structure, homodimer. Zn(2+) serves as cofactor.

The protein localises to the cytoplasm. Functionally, participates actively in the response to hyperosmotic and heat shock by preventing the aggregation of stress-denatured proteins and by disaggregating proteins, also in an autonomous, DnaK-independent fashion. Unfolded proteins bind initially to DnaJ; upon interaction with the DnaJ-bound protein, DnaK hydrolyzes its bound ATP, resulting in the formation of a stable complex. GrpE releases ADP from DnaK; ATP binding to DnaK triggers the release of the substrate protein, thus completing the reaction cycle. Several rounds of ATP-dependent interactions between DnaJ, DnaK and GrpE are required for fully efficient folding. Also involved, together with DnaK and GrpE, in the DNA replication of plasmids through activation of initiation proteins. The protein is Chaperone protein DnaJ of Rhizobium rhizogenes (strain K84 / ATCC BAA-868) (Agrobacterium radiobacter).